The following is a 252-amino-acid chain: Type IV pilus assembly protein PilF (252 aa).

The N-terminal stretch at 1-17 (MTVRAALVFLLAVGLTG) is a signal peptide. Cys18 carries the N-palmitoyl cysteine lipid modification. A lipid anchor (S-diacylglycerol cysteine) is attached at Cys18. TPR repeat units lie at residues 32 to 67 (GRDE…LEID), 84 to 101 (EMEP…LASD), 104 to 133 (NARV…EASQ), 139 to 171 (ERSR…LRLN), 174 to 203 (QPSV…LFAQ), and 208 to 235 (NARS…GLQL).

As to quaternary structure, interacts with PilQ; this interaction is essential for assemby of PilQ into secretins.

The protein resides in the cell outer membrane. Functionally, essential component of the type IV pilus (T4P) that plays a role in surface and host cell adhesion, colonization, biofilm maturation, virulence, and twitching, a form of surface-associated motility facilitated by cycles of extension, adhesion, and retraction of T4P fibers. Plays an essential role in the outer membrane localization and assembly of PilQ into secretins which are dodecamers of PilQ. The chain is Type IV pilus assembly protein PilF (pilF) from Pseudomonas aeruginosa (strain ATCC 15692 / DSM 22644 / CIP 104116 / JCM 14847 / LMG 12228 / 1C / PRS 101 / PAO1).